The chain runs to 483 residues: MSGSAAIMKAPAKSEFIIKPENTKAEVDTSNWPGLLKNYDKMLIRTSHFTPIPDHGSAPWSRDIKSYVSSGVINLDKPSNPSSHEVVAWIKRILRVDKTGHSGTLDPKVTGCLIVCIDRATRLVKAQQGAGKEYVCCIRFHDTVPGGEPAFAKALETLTGALFQRPPLISAVKRQLRIRTIHKSRLLEFDNERHLGVFWVSCEAGTYIRTLCVHLGLLLGVGAHMQELRRVRSGVMSEDDGSLVTLHDVLDAQWQYDNNGDEALLRKVIQPLETLLCTYKRLVVKDTAVNAVCYGAKLMIPGLLRYDQGIEQGEEVVLMTTKGEAIAIAIAQMGAVELATCDHGCVAKVKRCIMERDLYPRRWGMGPVASEKKKLKASGLLDKYGRPNEKTPASWLQSYKDYNVSSSEAPALPAPAGADAAAAPSTPALPAPEEKNESEEKSADASDSKKRKKDETAEEKAERKRLKKEKKEKKEKKKSDKDE.

The region spanning 279-354 (YKRLVVKDTA…CVAKVKRCIM (76 aa)) is the PUA domain. Residues 406-483 (SSEAPALPAP…KEKKKSDKDE (78 aa)) are disordered. Residues 409–428 (APALPAPAGADAAAAPSTPA) show a composition bias toward low complexity. Positions 432–462 (PEEKNESEEKSADASDSKKRKKDETAEEKAE) are enriched in basic and acidic residues. Basic residues predominate over residues 463–476 (RKRLKKEKKEKKEK).

Belongs to the pseudouridine synthase TruB family. As to quaternary structure, component of the small nucleolar ribonucleoprotein particles containing H/ACA-type snoRNAs (H/ACA snoRNPs).

The protein resides in the nucleus. Its subcellular location is the nucleolus. It carries out the reaction uridine in 5S rRNA = pseudouridine in 5S rRNA. It catalyses the reaction uridine in snRNA = pseudouridine in snRNA. The catalysed reaction is a uridine in mRNA = a pseudouridine in mRNA. Functionally, catalytic subunit of H/ACA small nucleolar ribonucleoprotein (H/ACA snoRNP) complex, which catalyzes pseudouridylation of rRNA. This involves the isomerization of uridine such that the ribose is subsequently attached to C5, instead of the normal N1. Pseudouridine ('psi') residues may serve to stabilize the conformation of rRNAs and play a central role in ribosomal RNA processing. The H/ACA snoRNP complex also mediates pseudouridylation of other types of RNAs. Catalyzes pseudouridylation at position 93 in U2 snRNA. Also catalyzes pseudouridylation of mRNAs; H/ACA-type snoRNAs probably guide pseudouridylation of mRNAs. This chain is H/ACA ribonucleoprotein complex subunit CBF5 (CBF5), found in Chaetomium thermophilum (strain DSM 1495 / CBS 144.50 / IMI 039719) (Thermochaetoides thermophila).